The chain runs to 581 residues: Nicotinic acid-CoA ligase pyr1 (581 aa).

AMP is bound at residue 204–215; that stretch reads MFLTSGTSGLPK. Positions 477–555 are AMP-binding; the sequence is EIEGILLKDP…DEIPRTGIGK (79 aa).

The protein belongs to the ATP-dependent AMP-binding enzyme family.

The catalysed reaction is nicotinate + ATP + CoA = nicotinyl-CoA + AMP + diphosphate. The protein operates within secondary metabolite biosynthesis; terpenoid biosynthesis. In terms of biological role, nicotinic acid-CoA ligase; part of the gene cluster that mediates the biosynthesis of pyripyropene A, a specific human acyl-coenzyme A:cholesterol acyltransferase 2 inhibitor. The first step of the pathway is the synthesis of nicotinyl-CoA from nicotinic acid by the nicotinic acid-CoA ligase pyr1. Nicotinyl-CoA is then a substrate of polyketide synthase pyr2 to produce 4-hydroxy-6-(3-pyridinyl)-2H-pyran-2-one (HPPO) which is further prenylated by the polyprenyl transferase pyr6 to yield farnesyl-HPPO. The next steps consist of an epoxidation of farnesyl-HPPO to epoxyfarnesyl-HPPO by FAD-dependent monooxygenase pyr5 and a cyclization of the terpenoid portion by the terpene cyclase pyr4 to yield deacetyl-pyripyropene E. The 2 cytochrome P450 monooxygenases pyr3 and pyr9, and the 2 acetyltransferases pyr7 and pyr8 are involved in the conversion of deacetyl-pyripyropene E into pyripyropene A through several cycles of oxidation and acetylation steps. Pyr7 acetylates deacetyl-pyripyropene E to pyripyropene E which is oxidized to 11-deacetyl-pyripyropene O by pyr3, which is in turn acetylated into pyripyropene O by pyr8. Pyripyropene O is then oxidized to deacetyl-pyripyropene A by pyr9. Deacetyl-pyripyropene A is finally acetylated to pyripyropene A by pyr8. The chain is Nicotinic acid-CoA ligase pyr1 from Aspergillus fumigatus (strain ATCC MYA-4609 / CBS 101355 / FGSC A1100 / Af293) (Neosartorya fumigata).